A 1496-amino-acid polypeptide reads, in one-letter code: Chromosome partition protein MukB (1496 aa).

63–70 is a binding site for ATP; the sequence is GGNGAGKS. Coiled-coil stretches lie at residues 328-493, 536-632, 808-832, 861-1171, and 1235-1291; these read KLEL…QRLS, KMQA…APAW, RAAR…HAER, NPEE…SAEE, and IDAI…LQNI. The flexible hinge stretch occupies residues 694-811; that stretch reads PDGSDDVRLN…EVPLFGRAAR (118 aa). Over residues 1082–1091 the composition is skewed to basic and acidic residues; the sequence is RARSRRDELQ. The tract at residues 1082–1101 is disordered; sequence RARSRRDELQQRLSQQRSRK.

It belongs to the SMC family. MukB subfamily. Homodimerization via its hinge domain. Binds to DNA via its C-terminal region. Interacts, and probably forms a ternary complex, with MukE and MukF via its C-terminal region. The complex formation is stimulated by calcium or magnesium. Interacts with tubulin-related protein FtsZ.

The protein localises to the cytoplasm. The protein resides in the nucleoid. Functionally, plays a central role in chromosome condensation, segregation and cell cycle progression. Functions as a homodimer, which is essential for chromosome partition. Involved in negative DNA supercoiling in vivo, and by this means organize and compact chromosomes. May achieve or facilitate chromosome segregation by condensation DNA from both sides of a centrally located replisome during cell division. The sequence is that of Chromosome partition protein MukB from Actinobacillus pleuropneumoniae serotype 5b (strain L20).